A 377-amino-acid chain; its full sequence is UDP-N-acetylglucosamine--N-acetylmuramyl-(pentapeptide) pyrophosphoryl-undecaprenol N-acetylglucosamine transferase (377 aa).

Residues 29 to 31, Asn142, Arg179, Ser213, and Gln308 each bind UDP-N-acetyl-alpha-D-glucosamine; that span reads TAG.

Belongs to the glycosyltransferase 28 family. MurG subfamily.

The protein localises to the cell membrane. It carries out the reaction di-trans,octa-cis-undecaprenyl diphospho-N-acetyl-alpha-D-muramoyl-L-alanyl-D-glutamyl-meso-2,6-diaminopimeloyl-D-alanyl-D-alanine + UDP-N-acetyl-alpha-D-glucosamine = di-trans,octa-cis-undecaprenyl diphospho-[N-acetyl-alpha-D-glucosaminyl-(1-&gt;4)]-N-acetyl-alpha-D-muramoyl-L-alanyl-D-glutamyl-meso-2,6-diaminopimeloyl-D-alanyl-D-alanine + UDP + H(+). It participates in cell wall biogenesis; peptidoglycan biosynthesis. In terms of biological role, cell wall formation. Catalyzes the transfer of a GlcNAc subunit on undecaprenyl-pyrophosphoryl-MurNAc-pentapeptide (lipid intermediate I) to form undecaprenyl-pyrophosphoryl-MurNAc-(pentapeptide)GlcNAc (lipid intermediate II). This Saccharopolyspora erythraea (strain ATCC 11635 / DSM 40517 / JCM 4748 / NBRC 13426 / NCIMB 8594 / NRRL 2338) protein is UDP-N-acetylglucosamine--N-acetylmuramyl-(pentapeptide) pyrophosphoryl-undecaprenol N-acetylglucosamine transferase.